Here is a 176-residue protein sequence, read N- to C-terminus: MTTIVSVRRNGQVVIGGDGQATLGNTVMKGNVKKVRRLYNDKVIAGFAGGTADAFTLFELFERKLEMHQGHLVKAAVELAKDWRTDRMLRKLEALLAVADENASLIITGNGDVIQPENDLIAIGSGGPYAQAAARALLENTDIGARDIVEKALGIAGDICIYTNHNLTIEELSSKA.

Thr-2 is a catalytic residue. 3 residues coordinate Na(+): Gly-157, Cys-160, and Thr-163.

It belongs to the peptidase T1B family. HslV subfamily. As to quaternary structure, a double ring-shaped homohexamer of HslV is capped on each side by a ring-shaped HslU homohexamer. The assembly of the HslU/HslV complex is dependent on binding of ATP.

The protein resides in the cytoplasm. The enzyme catalyses ATP-dependent cleavage of peptide bonds with broad specificity.. With respect to regulation, allosterically activated by HslU binding. Functionally, protease subunit of a proteasome-like degradation complex believed to be a general protein degrading machinery. The chain is ATP-dependent protease subunit HslV from Erwinia tasmaniensis (strain DSM 17950 / CFBP 7177 / CIP 109463 / NCPPB 4357 / Et1/99).